The sequence spans 551 residues: Seventh homolog of septin 1 (551 aa).

An N-acetylserine modification is found at S2. The 320-residue stretch at 20–339 (RGITYTMLLC…ENYRSEKLSS (320 aa)) folds into the Septin-type G domain. A G1 motif region spans residues 30–37 (GPAGTGKT). GTP-binding positions include 30–37 (GPAGTGKT), G138, 218–226 (RADSFTKEE), and R288. A G3 motif region spans residues 135-138 (MTHG). The interval 217–220 (TRAD) is G4 motif. The interval 381–417 (NLRADTPRNQVSGNFKENEYEDNGEHDSAENEQEMSP) is disordered. Y400 carries the post-translational modification Phosphotyrosine. A phosphoserine mark is found at S408 and S416. Residues 418-518 (VRQLGREIKQ…KLINQNKLNG (101 aa)) are a coiled coil. Residues K426 and K437 each participate in a glycyl lysine isopeptide (Lys-Gly) (interchain with G-Cter in SUMO) cross-link. Phosphoserine occurs at positions 447, 460, 519, 520, 522, and 525. A disordered region spans residues 515 to 551 (KLNGSSSSINSLQQSTRSQIKKNDTYTDLASIASGRD). The segment covering 519-532 (SSSSINSLQQSTRS) has biased composition (low complexity). T539 is subject to Phosphothreonine. 2 positions are modified to phosphoserine: S545 and S548.

It belongs to the TRAFAC class TrmE-Era-EngA-EngB-Septin-like GTPase superfamily. Septin GTPase family. In terms of assembly, component of the septin complex which consists of CDC3, CDC10, CDC11, CDC12 and probably SHS1 and rearranges to a cortical collar of highly ordered filaments at the mother-bud-neck. A complex formed by CDC3, CDC10, CDC11 and CDC12 is capable of forming long filaments in vitro and the components seem to be present in a 2:2:2:2 arrangement in vivo. The filaments are proposed to be formed by the end-to-end polymerization of CDC3-CDC12-CDC11 complexes with CDC10 serving as a bridge to bundle the polymers into paired filaments. Component of the GIN4 complex composed of at least BNI5, CDC3, CDC10, CDC11, CDC12, GIN4, NAP1 and SHS1. Self-associates. Interacts with CDC11 and SPA2. Post-translationally, phosphorylated by GIN4 and CLA4. Phosphorylation state is essential for septin ring dynamics during telophase. Sumoylated during mitosis on the mother cell side of the bud neck. Sumoylation probably plays a central role in regulating septin ring disassembly during the cell cycle.

Its subcellular location is the membrane. The protein resides in the bud neck. Functionally, septins are GTPases involved in cytokinesis that assemble early in the cell cycle as a patch at the incipient bud site and form a ring approximately 15 minutes before bud emergence, which transforms into an hour-glass shaped collar of cortical filaments that spans both sides of the mother-bud neck. This collar persists until just before cytokinesis, when it splits into two rings that occupy opposite sides of the neck. The septins at the bud neck serve as a structural scaffold that recruits different components involved in diverse processes at specific stages during the cell cycle. Many proteins bind asymmetrically to the septin collar. The septin assembly is regulated by protein kinases GIN4 and/or CLA4. May act by recruiting MYO1 and HOF1, a protein involved in septation, to the site of cleavage. Septins are also involved in cell morphogenesis, bud site selection, chitin deposition, cell cycle regulation, cell compartmentalization and spore wall formation. CDCd11 with SHS1 11 are involved in the recruitment of BNI5 and thereby ensure efficient localization at the bud neck of MYO1, the type II myosin of the actomyosin contractile ring. The protein is Seventh homolog of septin 1 of Saccharomyces cerevisiae (strain ATCC 204508 / S288c) (Baker's yeast).